The sequence spans 174 residues: Envelope glycoprotein (174 aa).

Residues 1 to 121 (VAAAQALREI…EWAVHLLKGL (121 aa)) lie on the Extracellular side of the membrane. Residues 4-54 (AQALREIERLACWSVKQANLTTSLLGDLLDDVTSIRHAVLQNRAAIDFLLL) adopt a coiled-coil conformation. Cysteines 60 and 67 form a disulfide. Residues 72 to 102 (SDHSESIQKKFQLMKEHVNKIGVDSDPIGSW) are a coiled coil. The helical transmembrane segment at 122–142 (LLGLVVILLLVVCLPCLLQFV) threads the bilayer. Residues Cys-134 and Cys-137 are each lipidated (S-palmitoyl cysteine; by host). At 143–174 (SSSIRKMIDNSLGYREERKKFQEAYKQPERVV) the chain is on the cytoplasmic side.

The protein belongs to the Alpharetroviruses envelope glycoprotein family. Heterodimer with the surface protein. The mature envelope protein (Env) consists of a trimer of SU-TM heterodimers attached by a labile interchain disulfide bond. In terms of processing, specific enzymatic cleavages in vivo yield mature proteins. Envelope glycoproteins are synthesized as an inactive precursor that is N-glycosylated and processed likely by host cell furin or by a furin-like protease in the Golgi to yield the mature SU and TM proteins. The cleavage site between SU and TM requires the minimal sequence [KR]-X-[KR]-R. Post-translationally, the transmembrane protein is palmitoylated. Palmitoylation is necessary for glycoprotein function and infectivity.

Its subcellular location is the virion membrane. It is found in the host cell membrane. Functionally, the transmembrane protein (TM) acts as a class I viral fusion protein. Under the current model, the protein has at least 3 conformational states: pre-fusion native state, pre-hairpin intermediate state, and post-fusion hairpin state. During viral and target cell membrane fusion, the coiled coil regions (heptad repeats) assume a trimer-of-hairpins structure, positioning the fusion peptide in close proximity to the C-terminal region of the ectodomain. The formation of this structure appears to drive apposition and subsequent fusion of viral and target cell membranes. Membranes fusion leads to delivery of the nucleocapsid into the cytoplasm. In UR2 avian sarcoma virus (UR2SV), this protein is Envelope glycoprotein (env).